Here is a 277-residue protein sequence, read N- to C-terminus: Ribosome-inactivating protein luffin-alpha (277 aa).

An N-terminal signal peptide occupies residues 1-19; sequence MKRFTVLILAIFVAASTVE. Glu179 is an active-site residue.

Belongs to the ribosome-inactivating protein family. Type 1 RIP subfamily.

It catalyses the reaction Endohydrolysis of the N-glycosidic bond at one specific adenosine on the 28S rRNA.. In Luffa aegyptiaca (Sponge gourd), this protein is Ribosome-inactivating protein luffin-alpha.